Here is a 418-residue protein sequence, read N- to C-terminus: Putative ion-transport protein YfeO (418 aa).

The next 12 helical transmembrane spans lie at 10 to 30, 54 to 74, 99 to 119, 120 to 140, 149 to 169, 186 to 206, 223 to 243, 258 to 278, 300 to 320, 322 to 342, 343 to 363, and 371 to 391; these read LLLS…LIVV, DSPL…GLVI, ALPG…SLGP, EHPI…RLLP, ILAS…AALI, LFAP…FFHP, ILSG…AVWC, VLVL…GGPV, DYFL…ASGF, GGRI…LHEH, VPAV…VLVV, and LFMA…CIVM.

The protein belongs to the chloride channel (TC 2.A.49) family.

The protein resides in the cell membrane. The polypeptide is Putative ion-transport protein YfeO (Shigella boydii serotype 4 (strain Sb227)).